We begin with the raw amino-acid sequence, 195 residues long: HTH-type transcriptional regulator BetI (195 aa).

Residues 8 to 68 (SIRRRQLIDA…ATMRDITSQL (61 aa)) form the HTH tetR-type domain. The segment at residues 31–50 (TIAQIARRAGVSTGIISHYF) is a DNA-binding region (H-T-H motif).

It functions in the pathway amine and polyamine biosynthesis; betaine biosynthesis via choline pathway [regulation]. Repressor involved in the biosynthesis of the osmoprotectant glycine betaine. It represses transcription of the choline transporter BetT and the genes of BetAB involved in the synthesis of glycine betaine. This Escherichia coli (strain UTI89 / UPEC) protein is HTH-type transcriptional regulator BetI.